A 285-amino-acid polypeptide reads, in one-letter code: Glutamate racemase (285 aa).

Substrate is bound by residues 28-29 (DS) and 60-61 (YG). The Proton donor/acceptor role is filled by Cys92. 93-94 (NT) lines the substrate pocket. Residue Cys204 is the Proton donor/acceptor of the active site. 205 to 206 (TH) contacts substrate.

It belongs to the aspartate/glutamate racemases family.

The catalysed reaction is L-glutamate = D-glutamate. It participates in cell wall biogenesis; peptidoglycan biosynthesis. Its function is as follows. Provides the (R)-glutamate required for cell wall biosynthesis. The chain is Glutamate racemase from Shigella flexneri serotype 5b (strain 8401).